The sequence spans 223 residues: Urease accessory protein UreG (223 aa).

Positions 1-30 are disordered; the sequence is MAKHSHDHTHDHHDRPRRVRKPGEPLRIGV. A GTP-binding site is contributed by 32-39; sequence GPVGSGKT.

This sequence belongs to the SIMIBI class G3E GTPase family. UreG subfamily. As to quaternary structure, homodimer. UreD, UreF and UreG form a complex that acts as a GTP-hydrolysis-dependent molecular chaperone, activating the urease apoprotein by helping to assemble the nickel containing metallocenter of UreC. The UreE protein probably delivers the nickel.

The protein localises to the cytoplasm. Its function is as follows. Facilitates the functional incorporation of the urease nickel metallocenter. This process requires GTP hydrolysis, probably effectuated by UreG. The chain is Urease accessory protein UreG from Mycobacterium ulcerans (strain Agy99).